An 81-amino-acid chain; its full sequence is Photosystem I iron-sulfur center (81 aa).

4Fe-4S ferredoxin-type domains follow at residues 2–31 (SHAV…MVPW) and 37–68 (GQIA…IRVY). 8 residues coordinate [4Fe-4S] cluster: Cys-11, Cys-14, Cys-17, Cys-21, Cys-48, Cys-51, Cys-54, and Cys-58.

The cyanobacterial PSI reaction center is composed of one copy each of PsaA,B,C,D,E,F,I,J,K,L,M and X, and forms trimeric complexes. [4Fe-4S] cluster is required as a cofactor.

Its subcellular location is the cellular thylakoid membrane. It carries out the reaction reduced [plastocyanin] + hnu + oxidized [2Fe-2S]-[ferredoxin] = oxidized [plastocyanin] + reduced [2Fe-2S]-[ferredoxin]. Functionally, apoprotein for the two 4Fe-4S centers FA and FB of photosystem I (PSI); essential for photochemical activity. FB is the terminal electron acceptor of PSI, donating electrons to ferredoxin. The C-terminus interacts with PsaA/B/D and helps assemble the protein into the PSI complex. Required for binding of PsaD and PsaE to PSI. PSI is a plastocyanin/cytochrome c6-ferredoxin oxidoreductase, converting photonic excitation into a charge separation, which transfers an electron from the donor P700 chlorophyll pair to the spectroscopically characterized acceptors A0, A1, FX, FA and FB in turn. The chain is Photosystem I iron-sulfur center from Prochlorococcus marinus subsp. pastoris (strain CCMP1986 / NIES-2087 / MED4).